The primary structure comprises 604 residues: DNA polymerase alpha subunit B (604 aa).

A disordered region spans residues 109-171 (ETLLNSYTTP…KYSSRSNRGE (63 aa)). A compositionally biased stretch (polar residues) spans 113-141 (NSYTTPSKGSQKRTITTPETPLTKRSVSA). 2 positions are modified to phosphothreonine: threonine 129 and threonine 132. 4 positions are modified to phosphoserine: serine 143, serine 149, serine 154, and serine 156. Residues 143–160 (SPHQLLSPSSFSPSATPP) are compositionally biased toward low complexity.

The protein belongs to the DNA polymerase alpha subunit B family. Component of the alpha DNA polymerase complex (also known as the alpha DNA polymerase-primase complex) consisting of four subunits: the catalytic subunit POLA1, the regulatory subunit POLA2, and the primase complex subunits PRIM1 and PRIM2 respectively. Within the complex, POLA1 directly interacts with PRIM2. Post-translationally, phosphorylated in a cell cycle-dependent manner, in G2/M phase.

The protein resides in the nucleus. Functionally, accessory subunit of the DNA polymerase alpha complex (also known as the alpha DNA polymerase-primase complex) which plays an essential role in the initiation of DNA synthesis. During the S phase of the cell cycle, the DNA polymerase alpha complex (composed of a catalytic subunit POLA1, an accessory subunit POLA2 and two primase subunits, the catalytic subunit PRIM1 and the regulatory subunit PRIM2) is recruited to DNA at the replicative forks via direct interactions with MCM10 and WDHD1. The primase subunit of the polymerase alpha complex initiates DNA synthesis by oligomerising short RNA primers on both leading and lagging strands. These primers are initially extended by the polymerase alpha catalytic subunit and subsequently transferred to polymerase delta and polymerase epsilon for processive synthesis on the lagging and leading strand, respectively. The protein is DNA polymerase alpha subunit B (POLA2) of Bos taurus (Bovine).